Here is a 686-residue protein sequence, read N- to C-terminus: Ovotransferrin (686 aa).

2 Transferrin-like domains span residues 7–333 (VRWC…SLRK) and 345–670 (IQWC…SLNT). 6 disulfides stabilise this stretch: Cys10–Cys45, Cys20–Cys36, Cys115–Cys197, Cys160–Cys174, Cys171–Cys182, and Cys228–Cys242. The tract at residues 333-341 (KDQLTVGPR) is connecting region. Cystine bridges form between Cys348–Cys380, Cys358–Cys371, Cys405–Cys680, Cys421–Cys643, Cys454–Cys530, Cys478–Cys671, Cys488–Cys502, Cys499–Cys513, and Cys570–Cys584. Residue Asn473 is glycosylated (N-linked (GlcNAc...) asparagine). A glycan (N-linked (GlcNAc...) asparagine) is linked at Asn548.

The protein belongs to the transferrin family. Monomer.

It localises to the secreted. Its function is as follows. Transferrins are iron binding transport proteins which can bind two Fe(3+) ions in association with the binding of an anion, usually bicarbonate. It is responsible for the transport of iron from sites of absorption and heme degradation to those of storage and utilization. Serum transferrin may also have a further role in stimulating cell proliferation. Ovotransferrin has a bacteriostatic function. Its concentration in avian egg is the highest concentration of any transferrin in vivo. The polypeptide is Ovotransferrin (Anas platyrhynchos (Mallard)).